The sequence spans 384 residues: Odorant receptor 46a, isoform B (384 aa).

Over 1 to 37 (MVTEDFYKYQVWYFQILGVWQLPTWAADHQRRFQSMR) the chain is Cytoplasmic. The helical transmembrane segment at 38-58 (FGFILVILFIMLLLFSFEMLN) threads the bilayer. N-linked (GlcNAc...) asparagine glycosylation is present at N59. At 59–65 (NISQVRE) the chain is on the extracellular side. Residues 66–86 (ILKVFFMFATEISCMAKLLHL) traverse the membrane as a helical segment. The Cytoplasmic portion of the chain corresponds to 87–130 (KLKSRKLAGLVDAMLSPEFGVKSEQEMQMLELDRVAVVRMRNSY). A helical membrane pass occupies residues 131–151 (GIMSLGAASLILIVPCFDNFG). At 152–165 (ELPLAMLEVCSIEG) the chain is on the extracellular side. The chain crosses the membrane as a helical span at residues 166-186 (WICYWSQYLFHSICLLPTCVL). Topologically, residues 187 to 247 (NITYDSVAYS…YNRIVRFKDL (61 aa)) are cytoplasmic. Residues 248-268 (VELFIKGPGSVQLMCSVLVLV) traverse the membrane as a helical segment. The Extracellular segment spans residues 269 to 283 (SNLYDMSTMSIANGD). Residues 284-304 (AIFMLKTCIYQLVMLWQIFII) form a helical membrane-spanning segment. Topologically, residues 305–348 (CYASNEVTVQSSRLCHSIYSSQWTGWNRANRRIVLLMMQRFNSP) are cytoplasmic. A helical transmembrane segment spans residues 349–369 (MLLSTFNPTFAFSLEAFGSIV). N370 is a glycosylation site (N-linked (GlcNAc...) asparagine). Residues 370-384 (NCSYSYFALLKRVNS) lie on the Extracellular side of the membrane.

The protein belongs to the insect chemoreceptor superfamily. Heteromeric odorant receptor channel (TC 1.A.69) family. Or2a subfamily. As to quaternary structure, interacts with Orco. Complexes exist early in the endomembrane system in olfactory sensory neurons (OSNs), coupling these complexes to the conserved ciliary trafficking pathway. In terms of tissue distribution, isoform B is expressed in the antenna.

Its subcellular location is the cell membrane. Odorant receptor which mediates acceptance or avoidance behavior, depending on its substrates. The odorant receptor repertoire encodes a large collection of odor stimuli that vary widely in identity, intensity, and duration. May form a complex with Orco to form odorant-sensing units, providing sensitive and prolonged odorant signaling and calcium permeability. This chain is Odorant receptor 46a, isoform B (Or46a), found in Drosophila melanogaster (Fruit fly).